The primary structure comprises 113 residues: Large ribosomal subunit protein uL24 (113 aa).

The segment at 48-70 is disordered; sequence HRKRVTNDKGTSSGGLEKRESPM.

It belongs to the universal ribosomal protein uL24 family. In terms of assembly, part of the 50S ribosomal subunit.

In terms of biological role, one of two assembly initiator proteins, it binds directly to the 5'-end of the 23S rRNA, where it nucleates assembly of the 50S subunit. One of the proteins that surrounds the polypeptide exit tunnel on the outside of the subunit. The polypeptide is Large ribosomal subunit protein uL24 (Tropheryma whipplei (strain TW08/27) (Whipple's bacillus)).